We begin with the raw amino-acid sequence, 167 residues long: Large ribosomal subunit protein bL9 (167 aa).

It belongs to the bacterial ribosomal protein bL9 family.

Its function is as follows. Binds to the 23S rRNA. The sequence is that of Large ribosomal subunit protein bL9 from Chlamydia muridarum (strain MoPn / Nigg).